A 335-amino-acid chain; its full sequence is Methionine aminopeptidase 1D, mitochondrial (335 aa).

The N-terminal 19 residues, 1-19 (MAAPSGVHLLVRRGSHRIF), are a transit peptide targeting the mitochondrion. His161 contributes to the substrate binding site. Residues Asp178, Asp189, and His252 each contribute to the a divalent metal cation site. His259 lines the substrate pocket. Residues Glu284 and Glu315 each contribute to the a divalent metal cation site.

This sequence belongs to the peptidase M24A family. Methionine aminopeptidase type 1 subfamily. Co(2+) serves as cofactor. Requires Zn(2+) as cofactor. It depends on Mn(2+) as a cofactor. Fe(2+) is required as a cofactor. In terms of tissue distribution, overexpressed in colon cancer cell lines and colon tumors as compared to normal tissues (at protein level).

The protein localises to the mitochondrion. The catalysed reaction is Release of N-terminal amino acids, preferentially methionine, from peptides and arylamides.. Removes the N-terminal methionine from nascent proteins. The N-terminal methionine is often cleaved when the second residue in the primary sequence is small and uncharged (Met-Ala-, Cys, Gly, Pro, Ser, Thr, or Val). Requires deformylation of the N(alpha)-formylated initiator methionine before it can be hydrolyzed. May play a role in colon tumorigenesis. This Homo sapiens (Human) protein is Methionine aminopeptidase 1D, mitochondrial (METAP1D).